Here is a 61-residue protein sequence, read N- to C-terminus: DNA-directed RNA polymerase subunit Rpo10 (61 aa).

Zn(2+) is bound by residues C6, C9, C42, and C43.

This sequence belongs to the archaeal Rpo10/eukaryotic RPB10 RNA polymerase subunit family. As to quaternary structure, part of the RNA polymerase complex. Zn(2+) is required as a cofactor.

It is found in the cytoplasm. It catalyses the reaction RNA(n) + a ribonucleoside 5'-triphosphate = RNA(n+1) + diphosphate. DNA-dependent RNA polymerase (RNAP) catalyzes the transcription of DNA into RNA using the four ribonucleoside triphosphates as substrates. This chain is DNA-directed RNA polymerase subunit Rpo10, found in Methanothrix thermoacetophila (strain DSM 6194 / JCM 14653 / NBRC 101360 / PT) (Methanosaeta thermophila).